The following is a 276-amino-acid chain: Glyoxal reductase (276 aa).

Catalysis depends on Tyr54, which acts as the Proton donor. Residue His112 coordinates substrate. 190–242 serves as a coordination point for NADP(+); sequence SPLMQGQLLDNEVLTQIAEKHNKSVAQVILRWDLQHGVVTIPKSIKEHRIIEN.

It belongs to the aldo/keto reductase family.

The enzyme catalyses (S)-lactaldehyde + NADP(+) = methylglyoxal + NADPH + H(+). Reduces glyoxal and methylglyoxal (2-oxopropanal). Is not involved in the vitamin B6 biosynthesis. The sequence is that of Glyoxal reductase (yvgN) from Bacillus subtilis (strain 168).